A 546-amino-acid polypeptide reads, in one-letter code: FAD-dependent monooxygenase (546 aa).

The signal sequence occupies residues 1 to 17 (MYDVIVVGAGWCGLAAA). FAD is bound at residue isoleucine 106. N-linked (GlcNAc...) asparagine glycosylation is found at asparagine 239 and asparagine 343.

This sequence belongs to the FAD-binding monooxygenase family. FAD serves as cofactor.

It participates in antifungal biosynthesis. FAD-dependent monooxygenase; part of the gene cluster that mediates the biosynthesis of the tetrahydropyranyl antifungal agent lanomycin that acts as an inhibitor of CYP51 and blocks the ergosterol biosynthesis. The biosynthesis probably begins with the formation of an hexaketide, followed by methionine mediated alkylation of C-2 and C-6, and methylation of the reduced C-3 oxygen, pyran forming reductive ring closure, oxygenation of C-4, beta-keto reduction, enoyl reduction and dehydration of the remaining oxygens, and finally, acylation with glycine to complete the biosynthesis. This is FAD-dependent monooxygenase from Pyrenophora dematioidea (Helminthosporium dematioideum).